A 146-amino-acid polypeptide reads, in one-letter code: Transcriptional regulator MraZ (146 aa).

2 consecutive SpoVT-AbrB domains span residues Ser5–Glu50 and Ala77–Gln120.

This sequence belongs to the MraZ family. As to quaternary structure, forms oligomers.

It is found in the cytoplasm. The protein resides in the nucleoid. The polypeptide is Transcriptional regulator MraZ (Desulforapulum autotrophicum (strain ATCC 43914 / DSM 3382 / VKM B-1955 / HRM2) (Desulfobacterium autotrophicum)).